The primary structure comprises 152 residues: 3-hydroxyacyl-[acyl-carrier-protein] dehydratase FabZ (152 aa).

The active site involves His58.

It belongs to the thioester dehydratase family. FabZ subfamily.

Its subcellular location is the cytoplasm. The enzyme catalyses a (3R)-hydroxyacyl-[ACP] = a (2E)-enoyl-[ACP] + H2O. In terms of biological role, involved in unsaturated fatty acids biosynthesis. Catalyzes the dehydration of short chain beta-hydroxyacyl-ACPs and long chain saturated and unsaturated beta-hydroxyacyl-ACPs. This is 3-hydroxyacyl-[acyl-carrier-protein] dehydratase FabZ from Prochlorococcus marinus (strain MIT 9215).